The following is an 87-amino-acid chain: UPF0250 protein KPN78578_06520 (87 aa).

The protein belongs to the UPF0250 family.

This chain is UPF0250 protein KPN78578_06520, found in Klebsiella pneumoniae subsp. pneumoniae (strain ATCC 700721 / MGH 78578).